The sequence spans 446 residues: 6-methylsalicylate 1-monooxygenase atA (446 aa).

Residues 7-27 (VSVAIIGGGIGGLSLAIGLLQ) traverse the membrane as a helical segment. FAD-binding residues include glutamate 37 and alanine 50. N-linked (GlcNAc...) asparagine glycosylation is present at asparagine 107. Residue arginine 116 coordinates FAD. Residue arginine 200 is part of the active site. Aspartate 311 and alanine 324 together coordinate FAD.

The protein belongs to the paxM FAD-dependent monooxygenase family. Requires FAD as cofactor.

The protein localises to the membrane. The catalysed reaction is 6-methylsalicylate + AH2 + O2 + H(+) = 3-methylcatechol + A + CO2 + H2O. It participates in secondary metabolite biosynthesis. 6-methylsalicylate 1-monooxygenase; part of the gene cluster that mediates the biosynthesis of terreic acid, a quinone epoxide inhibitor of Bruton's tyrosine kinase. The first step of the pathway is the synthesis of 6-methylsalicylic acid (6-MSA) by the 6-methylsalicylic acid synthase atX. In the biosynthesis of 6-MSA, atX utilizes one acetyl-CoA and three malonyl-CoAs as its substrates and catalyzes a series of programmed reactions including Claisen condensation, reduction, aldol cyclization, and the hydrolytic cleavage that yields 6-MSA. The 6-methylsalicylate 1-monooxygenase atA then catalyzes the decarboxylative hydroxylation of 6-MSA to 3-methylcatechol. The next step is the conversion of 3-methylcatechol to 3-methyl-1,2,4-benzenetriol by cytochrome P450 monooxygenase atE, which is enhanced by cytochrome P450 monooxygenase atG. Then, the epoxidase atD catalyzes the epoxidation and hydroxyl oxidation of 3-methyl-1,2,4-benzenetriol to terremutin. Lastly, GMC oxidoreductase atC oxidizes terremutin to terreic acid. The polypeptide is 6-methylsalicylate 1-monooxygenase atA (Aspergillus terreus (strain NIH 2624 / FGSC A1156)).